A 252-amino-acid chain; its full sequence is 5'-nucleotidase SurE (252 aa).

The a divalent metal cation site is built by Asp8, Asp9, Ser39, and Asn91.

The protein belongs to the SurE nucleotidase family. Requires a divalent metal cation as cofactor.

The protein resides in the cytoplasm. The catalysed reaction is a ribonucleoside 5'-phosphate + H2O = a ribonucleoside + phosphate. Functionally, nucleotidase that shows phosphatase activity on nucleoside 5'-monophosphates. This is 5'-nucleotidase SurE from Gemmatimonas aurantiaca (strain DSM 14586 / JCM 11422 / NBRC 100505 / T-27).